A 95-amino-acid chain; its full sequence is Aspartyl/glutamyl-tRNA(Asn/Gln) amidotransferase subunit C (95 aa).

Belongs to the GatC family. As to quaternary structure, heterotrimer of A, B and C subunits.

It catalyses the reaction L-glutamyl-tRNA(Gln) + L-glutamine + ATP + H2O = L-glutaminyl-tRNA(Gln) + L-glutamate + ADP + phosphate + H(+). It carries out the reaction L-aspartyl-tRNA(Asn) + L-glutamine + ATP + H2O = L-asparaginyl-tRNA(Asn) + L-glutamate + ADP + phosphate + 2 H(+). Functionally, allows the formation of correctly charged Asn-tRNA(Asn) or Gln-tRNA(Gln) through the transamidation of misacylated Asp-tRNA(Asn) or Glu-tRNA(Gln) in organisms which lack either or both of asparaginyl-tRNA or glutaminyl-tRNA synthetases. The reaction takes place in the presence of glutamine and ATP through an activated phospho-Asp-tRNA(Asn) or phospho-Glu-tRNA(Gln). The sequence is that of Aspartyl/glutamyl-tRNA(Asn/Gln) amidotransferase subunit C from Sinorhizobium fredii (strain NBRC 101917 / NGR234).